Consider the following 156-residue polypeptide: Cyanate hydratase (156 aa).

Residues Arg-96, Glu-99, and Ser-122 contribute to the active site.

The protein belongs to the cyanase family.

The enzyme catalyses cyanate + hydrogencarbonate + 3 H(+) = NH4(+) + 2 CO2. Its function is as follows. Catalyzes the reaction of cyanate with bicarbonate to produce ammonia and carbon dioxide. The sequence is that of Cyanate hydratase from Pseudomonas paraeruginosa (strain DSM 24068 / PA7) (Pseudomonas aeruginosa (strain PA7)).